A 916-amino-acid chain; its full sequence is DNA repair endonuclease XPF (916 aa).

The tract at residues 1–457 (MESGQPARRI…EVWMKFRKED (457 aa)) is helicase-like. Leucine-zipper stretches follow at residues 233–254 (LNAC…DLSL) and 270–298 (LDPL…LQYL). Lys289 bears the N6-acetyllysine mark. Positions 460–487 (KRIRKSHKRPKDPQNKERASTKERTLKK) are disordered. The span at 470–483 (KDPQNKERASTKER) shows a compositional bias: basic and acidic residues. The Nuclear localization signal signature appears at 486-491 (KKKKRK). Lys500 participates in a covalent cross-link: Glycyl lysine isopeptide (Lys-Gly) (interchain with G-Cter in SUMO2). Disordered stretches follow at residues 502–526 (EELE…ESCP) and 660–679 (TASA…EQNG). The residue at position 521 (Ser521) is a Phosphoserine. The interval 658–813 (RGTASADVST…PSPHATAELF (156 aa)) is nuclease. Positions 683–763 (SIVVDMREFR…RPVLLIEFDP (81 aa)) constitute an ERCC4 domain. Residue Ser764 is modified to Phosphoserine. A hhH2, dimerization with ERCC1 region spans residues 837 to 905 (TLPESEKYNP…QLYDFIHTSF (69 aa)). Lys911 is subject to N6-acetyllysine.

The protein belongs to the XPF family. As to quaternary structure, heterodimer composed of ERCC1 and ERCC4/XPF. Interacts with SLX4/BTBD12; this interaction is direct and links the ERCC1-ERCC4/XPF complex to SLX4, which may coordinate the action of the structure-specific endonuclease during DNA repair. Mg(2+) serves as cofactor. Post-translationally, acetylation at Lys-911 by KAT5 promotes interaction with ERCC1 by disrupting a salt bridge between Glu-907 and Lys-911, thereby exposing a second binding site for ERCC1. Deacetylated by SIRT1.

It localises to the nucleus. The protein resides in the chromosome. In terms of biological role, catalytic component of a structure-specific DNA repair endonuclease responsible for the 5-prime incision during DNA repair, and which is essential for nucleotide excision repair (NER) and interstrand cross-link (ICL) repair. This chain is DNA repair endonuclease XPF, found in Homo sapiens (Human).